Here is a 326-residue protein sequence, read N- to C-terminus: Phospho-N-acetylmuramoyl-pentapeptide-transferase (326 aa).

A run of 9 helical transmembrane segments spans residues 3–23 (ISIS…PAFI), 51–71 (TMGG…FALF), 79–99 (VGMI…DDFL), 115–135 (LALQ…GGDI), 138–158 (VFGY…FWLV), 169–189 (GVDG…GVIA), 195–215 (MDIL…FIFN), 221–243 (VFMG…MALH), and 306–326 (FFFW…LYLM).

It belongs to the glycosyltransferase 4 family. MraY subfamily. Mg(2+) is required as a cofactor.

The protein resides in the cell membrane. The enzyme catalyses UDP-N-acetyl-alpha-D-muramoyl-L-alanyl-gamma-D-glutamyl-L-lysyl-D-alanyl-D-alanine + di-trans,octa-cis-undecaprenyl phosphate = Mur2Ac(oyl-L-Ala-gamma-D-Glu-L-Lys-D-Ala-D-Ala)-di-trans,octa-cis-undecaprenyl diphosphate + UMP. It participates in cell wall biogenesis; peptidoglycan biosynthesis. Catalyzes the initial step of the lipid cycle reactions in the biosynthesis of the cell wall peptidoglycan: transfers peptidoglycan precursor phospho-MurNAc-pentapeptide from UDP-MurNAc-pentapeptide onto the lipid carrier undecaprenyl phosphate, yielding undecaprenyl-pyrophosphoryl-MurNAc-pentapeptide, known as lipid I. The sequence is that of Phospho-N-acetylmuramoyl-pentapeptide-transferase from Streptococcus pneumoniae serotype 2 (strain D39 / NCTC 7466).